The sequence spans 550 residues: O-phosphoserine--tRNA(Cys) ligase (550 aa).

Positions 1–32 are disordered; that stretch reads MRFNPQDWKEKSHTNFEGAWHDGPSVITPPGE. Substrate contacts are provided by residues 212-214, 257-259, 299-300, and asparagine 342; these read HMT, SAS, and YY.

Belongs to the class-II aminoacyl-tRNA synthetase family. O-phosphoseryl-tRNA(Cys) synthetase subfamily. In terms of assembly, homotetramer. Interacts with SepCysS.

The catalysed reaction is tRNA(Cys) + O-phospho-L-serine + ATP = O-phospho-L-seryl-tRNA(Cys) + AMP + diphosphate. Functionally, catalyzes the attachment of O-phosphoserine (Sep) to tRNA(Cys). In Methanoregula boonei (strain DSM 21154 / JCM 14090 / 6A8), this protein is O-phosphoserine--tRNA(Cys) ligase.